A 170-amino-acid chain; its full sequence is NAD(P)H-quinone oxidoreductase subunit I, chloroplastic (170 aa).

4Fe-4S ferredoxin-type domains lie at 55 to 84 (GRIH…VDWK) and 95 to 124 (LNYS…MTEE). Cysteine 64, cysteine 67, cysteine 70, cysteine 74, cysteine 104, cysteine 107, cysteine 110, and cysteine 114 together coordinate [4Fe-4S] cluster.

This sequence belongs to the complex I 23 kDa subunit family. In terms of assembly, NDH is composed of at least 16 different subunits, 5 of which are encoded in the nucleus. It depends on [4Fe-4S] cluster as a cofactor.

Its subcellular location is the plastid. The protein localises to the chloroplast thylakoid membrane. The catalysed reaction is a plastoquinone + NADH + (n+1) H(+)(in) = a plastoquinol + NAD(+) + n H(+)(out). It catalyses the reaction a plastoquinone + NADPH + (n+1) H(+)(in) = a plastoquinol + NADP(+) + n H(+)(out). Its function is as follows. NDH shuttles electrons from NAD(P)H:plastoquinone, via FMN and iron-sulfur (Fe-S) centers, to quinones in the photosynthetic chain and possibly in a chloroplast respiratory chain. The immediate electron acceptor for the enzyme in this species is believed to be plastoquinone. Couples the redox reaction to proton translocation, and thus conserves the redox energy in a proton gradient. This Spinacia oleracea (Spinach) protein is NAD(P)H-quinone oxidoreductase subunit I, chloroplastic.